The following is a 313-amino-acid chain: Probable cell division protein WhiA (313 aa).

A DNA-binding region (H-T-H motif) is located at residues 276–309; sequence SLKELGEMLHPKLGKSGVNHRLRKLDEIAERIRK.

This sequence belongs to the WhiA family.

Its function is as follows. Involved in cell division and chromosome segregation. This is Probable cell division protein WhiA from Ruminiclostridium cellulolyticum (strain ATCC 35319 / DSM 5812 / JCM 6584 / H10) (Clostridium cellulolyticum).